Here is a 238-residue protein sequence, read N- to C-terminus: Ribosomal RNA small subunit methyltransferase G (238 aa).

S-adenosyl-L-methionine is bound by residues Gly77, Phe82, 128–129, and Arg147; that span reads AE. The disordered stretch occupies residues 219-238; the sequence is KKTPARYPRKPGTPNKQPIQ.

The protein belongs to the methyltransferase superfamily. RNA methyltransferase RsmG family.

Its subcellular location is the cytoplasm. In terms of biological role, specifically methylates the N7 position of guanine in position 535 of 16S rRNA. This Geobacillus thermodenitrificans (strain NG80-2) protein is Ribosomal RNA small subunit methyltransferase G.